Here is a 441-residue protein sequence, read N- to C-terminus: Amino-acid acetyltransferase (441 aa).

One can recognise an N-acetyltransferase domain in the interval 295–434; the sequence is EQVRRATIND…QELYNYQRRS (140 aa).

This sequence belongs to the acetyltransferase family. ArgA subfamily. In terms of assembly, homohexamer.

The protein localises to the cytoplasm. It catalyses the reaction L-glutamate + acetyl-CoA = N-acetyl-L-glutamate + CoA + H(+). It participates in amino-acid biosynthesis; L-arginine biosynthesis; N(2)-acetyl-L-ornithine from L-glutamate: step 1/4. The polypeptide is Amino-acid acetyltransferase (Yersinia enterocolitica serotype O:8 / biotype 1B (strain NCTC 13174 / 8081)).